Reading from the N-terminus, the 447-residue chain is GTPase Der (447 aa).

2 EngA-type G domains span residues 3-167 and 181-354; these read PVIA…VQER and VKIA…AAAM. Residues 9–16, 56–60, 119–122, 187–194, 234–238, and 299–302 each bind GTP; these read GRPNVGKS, DTGGF, NKAE, DTAGL, and NKWD. A KH-like domain is found at 355-439; sequence VKLPTPQLTR…PLRIEFRTNK (85 aa).

The protein belongs to the TRAFAC class TrmE-Era-EngA-EngB-Septin-like GTPase superfamily. EngA (Der) GTPase family. Associates with the 50S ribosomal subunit.

Its function is as follows. GTPase that plays an essential role in the late steps of ribosome biogenesis. The polypeptide is GTPase Der (Cupriavidus pinatubonensis (strain JMP 134 / LMG 1197) (Cupriavidus necator (strain JMP 134))).